A 365-amino-acid chain; its full sequence is Ribosomal RNA large subunit methyltransferase F (365 aa).

Residues methionine 1 to proline 48 are disordered. The segment covering alanine 33–proline 48 has biased composition (basic and acidic residues).

This sequence belongs to the methyltransferase superfamily. METTL16/RlmF family.

It localises to the cytoplasm. The enzyme catalyses adenosine(1618) in 23S rRNA + S-adenosyl-L-methionine = N(6)-methyladenosine(1618) in 23S rRNA + S-adenosyl-L-homocysteine + H(+). Specifically methylates the adenine in position 1618 of 23S rRNA. The protein is Ribosomal RNA large subunit methyltransferase F of Shewanella baltica (strain OS223).